A 191-amino-acid chain; its full sequence is Protein GrpE (191 aa).

Over residues M1–S19 the composition is skewed to basic and acidic residues. Positions M1–I44 are disordered.

This sequence belongs to the GrpE family. As to quaternary structure, homodimer.

It localises to the cytoplasm. Participates actively in the response to hyperosmotic and heat shock by preventing the aggregation of stress-denatured proteins, in association with DnaK and GrpE. It is the nucleotide exchange factor for DnaK and may function as a thermosensor. Unfolded proteins bind initially to DnaJ; upon interaction with the DnaJ-bound protein, DnaK hydrolyzes its bound ATP, resulting in the formation of a stable complex. GrpE releases ADP from DnaK; ATP binding to DnaK triggers the release of the substrate protein, thus completing the reaction cycle. Several rounds of ATP-dependent interactions between DnaJ, DnaK and GrpE are required for fully efficient folding. The protein is Protein GrpE of Helicobacter pylori (strain G27).